Reading from the N-terminus, the 88-residue chain is Small ribosomal subunit protein bS16 (88 aa).

Belongs to the bacterial ribosomal protein bS16 family.

The chain is Small ribosomal subunit protein bS16 from Sorangium cellulosum (strain So ce56) (Polyangium cellulosum (strain So ce56)).